Consider the following 189-residue polypeptide: Elongation factor P (189 aa).

It belongs to the elongation factor P family.

The protein resides in the cytoplasm. It participates in protein biosynthesis; polypeptide chain elongation. Involved in peptide bond synthesis. Stimulates efficient translation and peptide-bond synthesis on native or reconstituted 70S ribosomes in vitro. Probably functions indirectly by altering the affinity of the ribosome for aminoacyl-tRNA, thus increasing their reactivity as acceptors for peptidyl transferase. This is Elongation factor P from Pseudomonas syringae pv. tomato (strain ATCC BAA-871 / DC3000).